Consider the following 353-residue polypeptide: D-alanine--D-alanine ligase (353 aa).

The ATP-grasp domain occupies 141-349; that stretch reads KAALAGAGLA…LEQLVHELLE (209 aa). 176-231 contributes to the ATP binding site; the sequence is ESGLCYPCFIKPANLGSSVGISKARNREELIHGLRLAATLDPRLVVEQGVQARELE. Residues D302, E316, and N318 each coordinate Mg(2+).

It belongs to the D-alanine--D-alanine ligase family. Mg(2+) serves as cofactor. The cofactor is Mn(2+).

The protein resides in the cytoplasm. It carries out the reaction 2 D-alanine + ATP = D-alanyl-D-alanine + ADP + phosphate + H(+). Its pathway is cell wall biogenesis; peptidoglycan biosynthesis. Functionally, cell wall formation. The sequence is that of D-alanine--D-alanine ligase from Parasynechococcus marenigrum (strain WH8102).